The sequence spans 188 residues: HTH-type transcriptional regulator LmrA (188 aa).

Residues 4 to 64 (GDSREKILSA…IEAVNEMKEY (61 aa)) form the HTH tetR-type domain. A DNA-binding region (H-T-H motif) is located at residues 27-46 (GLNQIIKESGAPKGSLYYHF).

Functionally, acts as a repressor of the lincomycin-resistance (lmrAB) and yxaGH operons. This Bacillus subtilis (strain 168) protein is HTH-type transcriptional regulator LmrA (lmrA).